We begin with the raw amino-acid sequence, 222 residues long: 3-demethoxyubiquinol 3-hydroxylase (222 aa).

6 residues coordinate Fe cation: glutamate 71, glutamate 101, histidine 104, glutamate 153, glutamate 185, and histidine 188.

Belongs to the COQ7 family. It depends on Fe cation as a cofactor.

The protein resides in the cell membrane. It carries out the reaction a 5-methoxy-2-methyl-3-(all-trans-polyprenyl)benzene-1,4-diol + AH2 + O2 = a 3-demethylubiquinol + A + H2O. It participates in cofactor biosynthesis; ubiquinone biosynthesis. Its function is as follows. Catalyzes the hydroxylation of 2-nonaprenyl-3-methyl-6-methoxy-1,4-benzoquinol during ubiquinone biosynthesis. This chain is 3-demethoxyubiquinol 3-hydroxylase, found in Bordetella pertussis (strain Tohama I / ATCC BAA-589 / NCTC 13251).